Here is a 286-residue protein sequence, read N- to C-terminus: Phycobilisome 32.1 kDa linker polypeptide, phycocyanin-associated, rod (286 aa).

In terms of domain architecture, PBS-linker spans 2–180; it reads AITTAASRLG…LYRGYANSDR (179 aa). Residues 234-286 form the CpcD-like domain; sequence DRVYRLEVTGIRSPGYPSVRRSSTVFIVPYERLSDKIQQVHKQGGKIVSVTSA.

This sequence belongs to the phycobilisome linker protein family. In terms of assembly, associated with the phycobilisome, a hemidiscoidal structure that is composed of two distinct substructures: a core complex and a number of rods radiating from the core.

Its subcellular location is the cellular thylakoid membrane. Rod linker protein, associated with phycocyanin. Linker polypeptides determine the state of aggregation and the location of the disk-shaped phycobiliprotein units within the phycobilisome and modulate their spectroscopic properties in order to mediate a directed and optimal energy transfer. This Nostoc sp. (strain PCC 7120 / SAG 25.82 / UTEX 2576) protein is Phycobilisome 32.1 kDa linker polypeptide, phycocyanin-associated, rod (cpcC).